A 469-amino-acid chain; its full sequence is Interstitial collagenase (469 aa).

The signal sequence occupies residues 1–19 (MFSLLLLLLLLCNTGSHGF). The propeptide at 20 to 99 (PAATSETQEQ…PRCGVPDVAE (80 aa)) is activation peptide. A Phosphoserine modification is found at Ser57. Positions 90-97 (PRCGVPDV) match the Cysteine switch motif. Cys92 contacts Zn(2+). Asn120 is a glycosylation site (N-linked (GlcNAc...) asparagine). Positions 124 and 158 each coordinate Ca(2+). Residues His168 and Asp170 each contribute to the Zn(2+) site. Ca(2+) is bound by residues Asp175, Gly176, Gly178, and Asn180. Residue His183 coordinates Zn(2+). Gly190, Gly192, and Asp194 together coordinate Ca(2+). His196 lines the Zn(2+) pocket. Asp198, Glu199, and Glu201 together coordinate Ca(2+). His218 lines the Zn(2+) pocket. The active site involves Glu219. Residues His222 and His228 each contribute to the Zn(2+) site. The residue at position 274 (Thr274) is a Phosphothreonine. 4 Hemopexin repeats span residues 275–324 (PQVC…WPQV), 325–371 (PNGL…FGFP), 374–422 (VKNI…FPGI), and 423–466 (GNKV…WFNC). A disulfide bridge connects residues Cys278 and Cys466. 2 residues coordinate Ca(2+): Asp285 and Gln329. Tyr360 carries the post-translational modification Phosphotyrosine; by PKDCC. Residues Asp378 and Asp427 each contribute to the Ca(2+) site.

Belongs to the peptidase M10A family. Requires Ca(2+) as cofactor. Zn(2+) is required as a cofactor. In terms of processing, undergoes autolytic cleavage to produce a N-terminal fragment having reduced collagenolytic activity. Tyrosine phosphorylated in platelets by PKDCC/VLK.

The protein resides in the secreted. It localises to the extracellular space. The protein localises to the extracellular matrix. It carries out the reaction Cleavage of the triple helix of collagen at about three-quarters of the length of the molecule from the N-terminus, at 775-Gly-|-Ile-776 in the alpha1(I) chain. Cleaves synthetic substrates and alpha-macroglobulins at bonds where P1' is a hydrophobic residue.. Can be activated without removal of the activation peptide. Cleaves collagens of types I, II, and III at one site in the helical domain. Also cleaves collagens of types VII and X. The sequence is that of Interstitial collagenase (MMP1) from Sus scrofa (Pig).